We begin with the raw amino-acid sequence, 106 residues long: Large ribosomal subunit protein uL23 (106 aa).

This sequence belongs to the universal ribosomal protein uL23 family. As to quaternary structure, part of the 50S ribosomal subunit. Contacts protein L29, and trigger factor when it is bound to the ribosome.

Functionally, one of the early assembly proteins it binds 23S rRNA. One of the proteins that surrounds the polypeptide exit tunnel on the outside of the ribosome. Forms the main docking site for trigger factor binding to the ribosome. The chain is Large ribosomal subunit protein uL23 from Neisseria gonorrhoeae (strain ATCC 700825 / FA 1090).